The chain runs to 562 residues: Phosphatidylinositol 4-phosphate 5-kinase type-1 alpha (562 aa).

The 369-residue stretch at 81–449 folds into the PIPK domain; it reads TSSALKGAIQ…RFQRFMCNTV (369 aa). Lys-103 participates in a covalent cross-link: Glycyl lysine isopeptide (Lys-Gly) (interchain with G-Cter in ubiquitin). Ser-486 is modified (phosphoserine). Residues 506–526 are disordered; that stretch reads HLGRPDVLPQTPPLEEISEGS.

Interacts with RAC1. Interacts with TUT1. Forms a complex with CDH1/E-cadherin, CTNNB1/beta-catenin and CTNND1 at the plasma membrane upon calcium stimulation. Found in a ternary complex with IRS1 and DGKZ in the absence of insulin stimulation. Interacts with DGKZ. Interacts with PIP4K2C; the interaction inhibits PIP5K1A kinase activity. In terms of tissue distribution, highly expressed in heart, placenta, skeletal muscle, kidney and pancreas. Detected at lower levels in brain, lung and liver.

It localises to the cell membrane. Its subcellular location is the cytoplasm. It is found in the nucleus. The protein resides in the nucleus speckle. The protein localises to the cell projection. It localises to the ruffle. Its subcellular location is the lamellipodium. The enzyme catalyses a 1,2-diacyl-sn-glycero-3-phospho-(1D-myo-inositol 4-phosphate) + ATP = a 1,2-diacyl-sn-glycero-3-phospho-(1D-myo-inositol-4,5-bisphosphate) + ADP + H(+). The catalysed reaction is 1-octadecanoyl-2-(5Z,8Z,11Z,14Z)-eicosatetraenoyl-sn-glycero-3-phospho-1D-myo-inositol 4-phosphate + ATP = 1-octadecanoyl-2-(5Z,8Z,11Z,14Z)-eicosatetraenoyl-sn-glycero-3-phospho-1D-myo-inositol 4,5-bisphosphate + ADP + H(+). It carries out the reaction 1,2-dihexadecanoyl-sn-glycero-3-phospho-(1D-myo-inositol-4-phosphate) + ATP = 1,2-dihexadecanoyl-sn-glycero-3-phospho-(1D-myo-inositol-4,5-bisphosphate) + ADP + H(+). It catalyses the reaction 1-octadecanoyl-2-(9Z)-octadecenoyl-sn-glycero-3-phospho-1D-myo-inositol 4-phosphate + ATP = 1-octadecanoyl-2-(9Z)-octadecenoyl-sn-glycero-3-phospho-1D-myo-inositol 4,5-bisphosphate + ADP + H(+). The enzyme catalyses 1-octadecanoyl-2-(9Z)-octadecenoyl-sn-glycero-3-phospho-1D-myo-inositol + ATP = 1-octadecanoyl-2-(9Z)-octadecenoyl-sn-glycero-3-phospho-1D-myo-inositol 5-phosphate + ADP + H(+). The catalysed reaction is 1-octadecanoyl-2-(9Z,12Z)-octadecadienoyl-sn-glycero-3-phospho-1D-myo-inositol + ATP = 1-octadecanoyl-2-(9Z,12Z)-octadecadienoyl-sn-glycero-3-phospho-1D-myo-inositol 5-phosphate + ADP + H(+). It carries out the reaction 1-octadecanoyl-2-(5Z,8Z,11Z,14Z-eicosatetraenoyl)-sn-glycero-3-phospho-(1D-myo-inositol) + ATP = 1-octadecanoyl-2-(5Z,8Z,11Z,14Z)-eicosatetraenoyl-sn-glycero-3-phospho-1D-myo-inositol 5-phosphate + ADP + H(+). It catalyses the reaction 1,2-di-(9Z,12Z)-octadecadienoyl-sn-glycero-3-phospho-1D-myo-inositol + ATP = 1,2-di(9Z,12Z)-octadecadienoyl-sn-glycero-3-phospho-1D-myo-inositol 5-phosphate + ADP + H(+). With respect to regulation, activated by diarachidonoyl phosphatidic acid (DAPA), when 1,2-dipalmitoyl-PI4P is used as a substrate. Catalyzes the phosphorylation of phosphatidylinositol 4-phosphate (PtdIns(4)P/PI4P) to form phosphatidylinositol 4,5-bisphosphate (PtdIns(4,5)P2/PIP2), a lipid second messenger that regulates several cellular processes such as signal transduction, vesicle trafficking, actin cytoskeleton dynamics, cell adhesion, and cell motility. PtdIns(4,5)P2 can directly act as a second messenger or can be utilized as a precursor to generate other second messengers: inositol 1,4,5-trisphosphate (IP3), diacylglycerol (DAG) or phosphatidylinositol-3,4,5-trisphosphate (PtdIns(3,4,5)P3/PIP3). PIP5K1A-mediated phosphorylation of PtdIns(4)P is the predominant pathway for PtdIns(4,5)P2 synthesis. Can also use phosphatidylinositol (PtdIns) as substrate in vitro. Together with PIP5K1C, is required for phagocytosis, both enzymes regulating different types of actin remodeling at sequential steps. Promotes particle ingestion by activating the WAS GTPase-binding protein that induces Arp2/3 dependent actin polymerization at the nascent phagocytic cup. Together with PIP5K1B, is required, after stimulation by G-protein coupled receptors, for the synthesis of IP3 that will induce stable platelet adhesion. Recruited to the plasma membrane by the E-cadherin/beta-catenin complex where it provides the substrate PtdIns(4,5)P2 for the production of PtdIns(3,4,5)P3, IP3 and DAG, that will mobilize internal calcium and drive keratinocyte differentiation. Positively regulates insulin-induced translocation of SLC2A4 to the cell membrane in adipocytes. Together with PIP5K1C has a role during embryogenesis. Independently of its catalytic activity, is required for membrane ruffling formation, actin organization and focal adhesion formation during directional cell migration by controlling integrin-induced translocation of the small GTPase RAC1 to the plasma membrane. Also functions in the nucleus where it acts as an activator of TUT1 adenylyltransferase activity in nuclear speckles, thereby regulating mRNA polyadenylation of a select set of mRNAs. This Homo sapiens (Human) protein is Phosphatidylinositol 4-phosphate 5-kinase type-1 alpha.